The sequence spans 1863 residues: Breast cancer type 1 susceptibility protein homolog (1863 aa).

Met1 bears the N-acetylmethionine mark. The RING-type zinc-finger motif lies at 24–65 (CPICLELIKEPVSTKCDHIFCKFCMLKLLNQKKGPSQCPLCK). A Glycyl lysine isopeptide (Lys-Gly) (interchain with G-Cter in SUMO2) cross-link involves residue Lys109. Ser114 carries the phosphoserine modification. Residues 231–267 (TDVTNTEHHQPSNNDLNTTEKRATERHPEKYQGSSVS) are disordered. Over residues 248 to 260 (TTEKRATERHPEK) the composition is skewed to basic and acidic residues. A Glycyl lysine isopeptide (Lys-Gly) (interchain with G-Cter in SUMO2) cross-link involves residue Lys301. A disordered region spans residues 306–338 (NKSKQPGLARSQHNRWAGSKETCNDRQTPSTEK). Lys339 participates in a covalent cross-link: Glycyl lysine isopeptide (Lys-Gly) (interchain with G-Cter in SUMO2). 4 positions are modified to phosphoserine: Ser395, Ser398, Ser423, and Ser434. Residues Lys443, Lys459, and Lys519 each participate in a glycyl lysine isopeptide (Lys-Gly) (interchain with G-Cter in SUMO2) cross-link. Ser551 bears the Phosphoserine mark. Glycyl lysine isopeptide (Lys-Gly) (interchain with G-Cter in SUMO2) cross-links involve residues Lys583 and Lys654. Positions 650–735 (IKKKKYNQMP…LPREEKEEKL (86 aa)) are disordered. A phosphoserine mark is found at Ser694, Ser708, and Ser725. Residues 705–716 (APGSFTNCSNTS) are compositionally biased toward polar residues. Residues Lys734 and Lys739 each participate in a glycyl lysine isopeptide (Lys-Gly) (interchain with G-Cter in SUMO2) cross-link. A phosphoserine mark is found at Ser753 and Ser840. Glycyl lysine isopeptide (Lys-Gly) (interchain with G-Cter in SUMO2) cross-links involve residues Lys918 and Lys987. At Ser988 the chain carries Phosphoserine; by CHEK2. Ser1009 is modified (phosphoserine). Positions 1045–1066 (NEVGSSTNEVGSSINEVGSSDE) are disordered. Lys1079 is covalently cross-linked (Glycyl lysine isopeptide (Lys-Gly) (interchain with G-Cter in SUMO2)). Phosphoserine occurs at positions 1143, 1189, 1191, 1211, 1217, 1218, 1280, 1328, 1336, 1342, and 1387. Residues 1181–1216 (VQRGELSRSPSPFTHTHLAQGYRRGAKKLESSEENL) form a disordered region. Positions 1322–1394 (KQMRHQSESQ…LSSQSDILTT (73 aa)) are disordered. Positions 1342-1360 (SDDEERGTDLEENNQEEQG) are enriched in acidic residues. Over residues 1373–1394 (ESETSVSEDCSGLSSQSDILTT) the composition is skewed to polar residues. Phosphothreonine is present on Thr1394. The interval 1397–1424 (RDTMQDNLIKLQQEMAELEAVLEQHGSQ) is interaction with PALB2. 4 positions are modified to phosphoserine: Ser1423, Ser1457, Ser1524, and Ser1542. Positions 1440-1504 (EDLRNPEQST…RSSPSKCPSL (65 aa)) are disordered. A compositionally biased stretch (polar residues) spans 1445–1470 (PEQSTSEKAVLTSQKSSEYPISQNPE). Disordered stretches follow at residues 1540 to 1597 (EESG…PSST) and 1610 to 1642 (SAQSPAAAQTTNTAGYNAMEESVSREKPELTAS). The span at 1610–1624 (SAQSPAAAQTTNTAG) shows a compositional bias: polar residues. 2 consecutive BRCT domains span residues 1642 to 1736 (STER…DFEV) and 1756 to 1855 (QDRK…TYLI).

Heterodimer with BARD1. Part of the BRCA1-associated genome surveillance complex (BASC), which contains BRCA1, MSH2, MSH6, MLH1, ATM, BLM, PMS2 and the MRE11-RAD50-NBN protein (MRN) complex. This association could be a dynamic process changing throughout the cell cycle and within subnuclear domains. Component of the BRCA1-A complex, at least composed of BRCA1, BARD1, UIMC1/RAP80, ABRAXAS1, BRCC3/BRCC36, BABAM2 and BABAM1/NBA1. Interacts (via the BRCT domains) with ABRAXAS1 (phosphorylated form); this is important for recruitment to sites of DNA damage. Can form a heterotetramer with two molecules of ABRAXAS1 (phosphorylated form). Component of the BRCA1-RBBP8 complex. Interacts (via the BRCT domains) with RBBP8 ('Ser-327' phosphorylated form); the interaction ubiquitinates RBBP8, regulates CHEK1 activation, and involves RBBP8 in BRCA1-dependent G2/M checkpoint control on DNA damage. Associates with RNA polymerase II holoenzyme. Interacts with SMC1A, NELFB, DCLRE1C, CLSPN. CHEK1, CHEK2, BAP1, BRCC3, UBXN1 and PCLAF. Interacts (via BRCT domains) with BRIP1 (phosphorylated form). Interacts with FANCD2 (ubiquitinated form). Interacts with H2AX (phosphorylated on 'Ser-140'). Interacts (via the BRCT domains) with ACACA (phosphorylated form); the interaction prevents dephosphorylation of ACACA. Part of a BRCA complex containing BRCA1, BRCA2 and PALB2. Interacts directly with PALB2; the interaction is essential for its function in HRR. Interacts directly with BRCA2; the interaction occurs only in the presence of PALB2 which serves as the bridging protein. Interacts (via the BRCT domains) with LMO4; the interaction represses the transcriptional activity of BRCA1. Interacts (via the BRCT domains) with CCAR2 (via N-terminus); the interaction represses the transcriptional activator activity of BRCA1. Interacts with EXD2. Interacts (via C-terminus) with DHX9; this interaction is direct and links BRCA1 to the RNA polymerase II holoenzyme. Interacts with DNA helicase ZGRF1; the interaction is increased following DNA damage induction. In terms of processing, phosphorylated in response to IR, UV, and various stimuli that cause checkpoint activation, probably by ATM or ATR. Phosphorylation at Ser-988 by CHEK2 regulates mitotic spindle assembly. Phosphorylation by AURKA regulates centrosomal microtubule nucleation. Post-translationally, autoubiquitinated, undergoes 'Lys-6'-linked polyubiquitination. 'Lys-6'-linked polyubiquitination does not promote degradation.

The protein resides in the nucleus. The protein localises to the chromosome. Its subcellular location is the cytoplasm. The catalysed reaction is S-ubiquitinyl-[E2 ubiquitin-conjugating enzyme]-L-cysteine + [acceptor protein]-L-lysine = [E2 ubiquitin-conjugating enzyme]-L-cysteine + N(6)-ubiquitinyl-[acceptor protein]-L-lysine.. It participates in protein modification; protein ubiquitination. Its function is as follows. E3 ubiquitin-protein ligase that specifically mediates the formation of 'Lys-6'-linked polyubiquitin chains and plays a central role in DNA repair by facilitating cellular responses to DNA damage. It is unclear whether it also mediates the formation of other types of polyubiquitin chains. The BRCA1-BARD1 heterodimer coordinates a diverse range of cellular pathways such as DNA damage repair, ubiquitination and transcriptional regulation to maintain genomic stability. Regulates centrosomal microtubule nucleation. Required for appropriate cell cycle arrests after ionizing irradiation in both the S-phase and the G2 phase of the cell cycle. Required for FANCD2 targeting to sites of DNA damage. Inhibits lipid synthesis by binding to inactive phosphorylated ACACA and preventing its dephosphorylation. Contributes to homologous recombination repair (HRR) via its direct interaction with PALB2, fine-tunes recombinational repair partly through its modulatory role in the PALB2-dependent loading of BRCA2-RAD51 repair machinery at DNA breaks. Component of the BRCA1-RBBP8 complex which regulates CHEK1 activation and controls cell cycle G2/M checkpoints on DNA damage via BRCA1-mediated ubiquitination of RBBP8. Acts as a transcriptional activator. This Pongo pygmaeus (Bornean orangutan) protein is Breast cancer type 1 susceptibility protein homolog (BRCA1).